The primary structure comprises 28 residues: TRRTAFLFDELSLWHSASQYALILPVGG.

As to quaternary structure, homotetramer.

It carries out the reaction an N-acetylarylalkylamine + H2O = an aralkylamine + acetate. With respect to regulation, activated by divalent metal ions. Inhibited by certain thiol reagents. Functionally, shows a strict specificity for N-acetyl arylalkylamines but not acetanilide derivatives. The chain is Arylalkyl acylamidase from Pseudomonas putida (Arthrobacter siderocapsulatus).